Here is a 183-residue protein sequence, read N- to C-terminus: Inosine/xanthosine triphosphatase (183 aa).

Asp-75 provides a ligand contact to Mg(2+). 75-76 provides a ligand contact to substrate; sequence DG.

Belongs to the YjjX NTPase family. Homodimer. The cofactor is Mg(2+). Requires Mn(2+) as cofactor.

It carries out the reaction XTP + H2O = XDP + phosphate + H(+). The catalysed reaction is ITP + H2O = IDP + phosphate + H(+). Its function is as follows. Phosphatase that hydrolyzes non-canonical purine nucleotides such as XTP and ITP to their respective diphosphate derivatives. Probably excludes non-canonical purines from DNA/RNA precursor pool, thus preventing their incorporation into DNA/RNA and avoiding chromosomal lesions. This chain is Inosine/xanthosine triphosphatase, found in Vibrio vulnificus (strain CMCP6).